A 353-amino-acid chain; its full sequence is Photosystem II D2 protein (353 aa).

Position 2 is an N-acetylthreonine (Thr2). Thr2 is modified (phosphothreonine). A helical membrane pass occupies residues 41-61 (CAYFALGGWFTGTTFVTSWYT). His118 is a binding site for chlorophyll a. Residues 125 to 141 (GFMLRQFELARSVQLRP) form a helical membrane-spanning segment. 2 residues coordinate pheophytin a: Gln130 and Asn143. The chain crosses the membrane as a helical span at residues 153–166 (VFVSVFLIYPLGQS). His198 is a chlorophyll a binding site. The helical transmembrane segment at 208-228 (AALLCAIHGATVENTLFEDGD) threads the bilayer. Residues His215 and Phe262 each contribute to the a plastoquinone site. His215 lines the Fe cation pocket. His269 serves as a coordination point for Fe cation. The helical transmembrane segment at 279 to 295 (GLWMSAIGVVGLALNLR) threads the bilayer.

The protein belongs to the reaction center PufL/M/PsbA/D family. In terms of assembly, PSII is composed of 1 copy each of membrane proteins PsbA, PsbB, PsbC, PsbD, PsbE, PsbF, PsbH, PsbI, PsbJ, PsbK, PsbL, PsbM, PsbT, PsbX, PsbY, PsbZ, Psb30/Ycf12, at least 3 peripheral proteins of the oxygen-evolving complex and a large number of cofactors. It forms dimeric complexes. The D1/D2 heterodimer binds P680, chlorophylls that are the primary electron donor of PSII, and subsequent electron acceptors. It shares a non-heme iron and each subunit binds pheophytin, quinone, additional chlorophylls, carotenoids and lipids. There is also a Cl(-1) ion associated with D1 and D2, which is required for oxygen evolution. The PSII complex binds additional chlorophylls, carotenoids and specific lipids. serves as cofactor.

The protein localises to the plastid. It is found in the chloroplast thylakoid membrane. The catalysed reaction is 2 a plastoquinone + 4 hnu + 2 H2O = 2 a plastoquinol + O2. Functionally, photosystem II (PSII) is a light-driven water:plastoquinone oxidoreductase that uses light energy to abstract electrons from H(2)O, generating O(2) and a proton gradient subsequently used for ATP formation. It consists of a core antenna complex that captures photons, and an electron transfer chain that converts photonic excitation into a charge separation. The D1/D2 (PsbA/PsbD) reaction center heterodimer binds P680, the primary electron donor of PSII as well as several subsequent electron acceptors. D2 is needed for assembly of a stable PSII complex. This is Photosystem II D2 protein from Liriodendron tulipifera (Tuliptree).